Reading from the N-terminus, the 384-residue chain is MIRIYTQLEQGEAWLRRYSDRLPLFTCILGFTETGLIPGISAAGRTPEDRKYTACADAEFLYYGAEHQPQYPLPPLTAGASPVLISRAVVEAFNMPVYLFNAGLPQSPAIPAIDLGGCPAKCLSTGAAMELTTVEHLFKQGLLWGERLAAEVPEGYVILSECVVGGTTTALAMLTGLGINAAGKVNSSHPVCNHEQKWQLVQQGLEAGKEAGGQGVGCRGDKSPIDPLKLVAAVGDPMQVVVAGMAIAASRGCGVMLAGGTQMLAVYALASAIAETYNLSWQPTAVVVATTRWVAEDSTGGTVELALNIGKNSQYPQIMTPPLLATKLSFANSQYPQLQAYEQGFVKEGVGAGAACIAANLYKNWQQHQLLQAIENQIQRLLDR.

This sequence belongs to the UPF0284 family.

The chain is UPF0284 protein alr0297 from Nostoc sp. (strain PCC 7120 / SAG 25.82 / UTEX 2576).